We begin with the raw amino-acid sequence, 341 residues long: Peroxisomal membrane protein import receptor PEX19 (341 aa).

Residues 1–18 (MNENEYDNFDDLDDLLDE) are compositionally biased toward acidic residues. Disordered stretches follow at residues 1–26 (MNEN…LDEQ), 39–66 (DSEN…EDPE), 109–141 (VPRQ…FKNI), 293–312 (LGDS…NEEE), and 318–341 (LEID…CKQQ). A compositionally biased stretch (basic and acidic residues) spans 39-53 (DSENKEKNAESKDSD). Position 61 is a phosphoserine (S61). A compositionally biased stretch (polar residues) spans 113 to 141 (QMEQGSSSLKSNSTDKGTLNGSNPGFKNI). S303 is modified (phosphoserine). A compositionally biased stretch (basic and acidic residues) spans 330 to 341 (LDKELTDGCKQQ). C338 carries the post-translational modification Cysteine methyl ester. A lipid anchor (S-farnesyl cysteine) is attached at C338. Positions 339 to 341 (KQQ) are cleaved as a propeptide — removed in mature form.

This sequence belongs to the peroxin-19 family. Interacts (farnesylated) with PEX3; farnesylation is required for this interaction. Interacts with PEX2, PEX5, PEX10, PEX11, PEX12, PEX13, PEX14, PEX17, PEX22, PEX25, PEX30 and PEX32; the interaction requires well-defined PEX19-binding sites within the peroxisomal membrane protein targeting signal (mPTS) of the PMPs and is independent on the presence of PEX3. Interacts with VPS1.

It is found in the cytoplasm. The protein localises to the peroxisome membrane. It localises to the endoplasmic reticulum membrane. Required for proper post-translational import and stabilization of peroxisomal membrane proteins (PMPs). Acts as a cytosolic import receptor for PMPs and delivers them to the docking factor PEX3 at the peroxisomal membrane for subsequent insertion into the membrane. Acts as a chaperone in stabilizing or maintaining PMPs in the lipid bilayer. Directs PEX17, a peripheral component of the peroxisomal matrix protein translocation machinery, to peroxisomes. Stabilizes VPS1, a protein required for peroxisomal fission, at the peroxisomal membrane. Also acts in conjunction with PEX3 in the formation of peroxisomes from preperoxisomal compartments at the endoplasmic reticulum during de novo peroxisome synthesis, probably via the import of additional PMPs. The sequence is that of Peroxisomal membrane protein import receptor PEX19 (PEX19) from Saccharomyces cerevisiae (strain YJM789) (Baker's yeast).